The chain runs to 291 residues: ATP synthase gamma chain (291 aa).

The protein belongs to the ATPase gamma chain family. In terms of assembly, F-type ATPases have 2 components, CF(1) - the catalytic core - and CF(0) - the membrane proton channel. CF(1) has five subunits: alpha(3), beta(3), gamma(1), delta(1), epsilon(1). CF(0) has three main subunits: a, b and c.

The protein resides in the cell inner membrane. In terms of biological role, produces ATP from ADP in the presence of a proton gradient across the membrane. The gamma chain is believed to be important in regulating ATPase activity and the flow of protons through the CF(0) complex. The sequence is that of ATP synthase gamma chain from Burkholderia thailandensis (strain ATCC 700388 / DSM 13276 / CCUG 48851 / CIP 106301 / E264).